Consider the following 385-residue polypeptide: S-adenosylmethionine synthase (385 aa).

H15 is a binding site for ATP. D17 is a Mg(2+) binding site. E43 is a K(+) binding site. E56 and Q99 together coordinate L-methionine. The tract at residues 99-109 is flexible loop; it reads QSPDINQGVDR. ATP-binding positions include 164–166, 230–231, D239, 245–246, A262, and K266; these read DAK, RF, and RK. D239 is a binding site for L-methionine. K270 serves as a coordination point for L-methionine.

The protein belongs to the AdoMet synthase family. Homotetramer; dimer of dimers. Requires Mg(2+) as cofactor. The cofactor is K(+).

It localises to the cytoplasm. It carries out the reaction L-methionine + ATP + H2O = S-adenosyl-L-methionine + phosphate + diphosphate. The protein operates within amino-acid biosynthesis; S-adenosyl-L-methionine biosynthesis; S-adenosyl-L-methionine from L-methionine: step 1/1. Its function is as follows. Catalyzes the formation of S-adenosylmethionine (AdoMet) from methionine and ATP. The overall synthetic reaction is composed of two sequential steps, AdoMet formation and the subsequent tripolyphosphate hydrolysis which occurs prior to release of AdoMet from the enzyme. This is S-adenosylmethionine synthase from Hamiltonella defensa subsp. Acyrthosiphon pisum (strain 5AT).